Here is an 87-residue protein sequence, read N- to C-terminus: Phosphoribosyl-ATP pyrophosphatase (87 aa).

The protein belongs to the PRA-PH family.

Its subcellular location is the cytoplasm. The catalysed reaction is 1-(5-phospho-beta-D-ribosyl)-ATP + H2O = 1-(5-phospho-beta-D-ribosyl)-5'-AMP + diphosphate + H(+). It participates in amino-acid biosynthesis; L-histidine biosynthesis; L-histidine from 5-phospho-alpha-D-ribose 1-diphosphate: step 2/9. The protein is Phosphoribosyl-ATP pyrophosphatase of Nocardia farcinica (strain IFM 10152).